Here is a 513-residue protein sequence, read N- to C-terminus: Bifunctional purine biosynthesis protein PurH (513 aa).

Residues 1–145 (MTKKAIISVY…KNFKYITVII (145 aa)) enclose the MGS-like domain.

The protein belongs to the PurH family.

The enzyme catalyses (6R)-10-formyltetrahydrofolate + 5-amino-1-(5-phospho-beta-D-ribosyl)imidazole-4-carboxamide = 5-formamido-1-(5-phospho-D-ribosyl)imidazole-4-carboxamide + (6S)-5,6,7,8-tetrahydrofolate. It catalyses the reaction IMP + H2O = 5-formamido-1-(5-phospho-D-ribosyl)imidazole-4-carboxamide. It functions in the pathway purine metabolism; IMP biosynthesis via de novo pathway; 5-formamido-1-(5-phospho-D-ribosyl)imidazole-4-carboxamide from 5-amino-1-(5-phospho-D-ribosyl)imidazole-4-carboxamide (10-formyl THF route): step 1/1. The protein operates within purine metabolism; IMP biosynthesis via de novo pathway; IMP from 5-formamido-1-(5-phospho-D-ribosyl)imidazole-4-carboxamide: step 1/1. This is Bifunctional purine biosynthesis protein PurH from Caldicellulosiruptor saccharolyticus (strain ATCC 43494 / DSM 8903 / Tp8T 6331).